A 719-amino-acid chain; its full sequence is DNA polymerase epsilon subunit B (719 aa).

Positions 107 to 147 (SIPPKTKTYNNGGGKTTTIDRFLTKRPSPSDNDEGPLDQSI) are disordered.

It belongs to the DNA polymerase epsilon subunit B family. In terms of assembly, heterotetramer. Consists of four subunits: POL2, DPB2, DPB3 and DPB4.

The protein resides in the nucleus. As accessory component of the DNA polymerase epsilon (DNA polymerase II) participates in chromosomal DNA replication. The polypeptide is DNA polymerase epsilon subunit B (DPB2) (Candida glabrata (strain ATCC 2001 / BCRC 20586 / JCM 3761 / NBRC 0622 / NRRL Y-65 / CBS 138) (Yeast)).